We begin with the raw amino-acid sequence, 218 residues long: MTNTEIFNKLTNAIVTQDIAGCAKLTQEALDAGISPLDIITKGLSPGMKIIGDKFEAAEIFLPQIMMSGKAMSSAMEILTPELEKTKVEGEEGTGLAITFVAEGDIHDIGHRLVTTMLGANGFDILDLGVDVLNETVIEEAAKRKGQKIILVGSALMTTSMLGQKDLMDRLREENLRDSVKCMFGGAPVSDKWIDEIGADATAENAAEAAKVALNVMK.

The 91-residue stretch at 1 to 91 folds into the B12-binding N-terminal domain; that stretch reads MTNTEIFNKL…ELEKTKVEGE (91 aa). Residues 94 to 218 form the B12-binding domain; that stretch reads TGLAITFVAE…AAKVALNVMK (125 aa). His-107 contacts methylcob(III)alamin.

This sequence belongs to the methylamine corrinoid protein family. Can form a complex with MtmB.

The protein operates within one-carbon metabolism; methanogenesis from methylamine. Acts as a methyl group carrier between MtmB and MtbA. The polypeptide is Monomethylamine corrinoid protein 2 (mtmC2) (Methanosarcina mazei (strain ATCC BAA-159 / DSM 3647 / Goe1 / Go1 / JCM 11833 / OCM 88) (Methanosarcina frisia)).